The sequence spans 101 residues: Small ribosomal subunit protein eS24 (101 aa).

This sequence belongs to the eukaryotic ribosomal protein eS24 family.

This Methanocaldococcus jannaschii (strain ATCC 43067 / DSM 2661 / JAL-1 / JCM 10045 / NBRC 100440) (Methanococcus jannaschii) protein is Small ribosomal subunit protein eS24.